A 194-amino-acid chain; its full sequence is Peptidyl-tRNA hydrolase (194 aa).

Tyr-16 is a binding site for tRNA. Residue His-21 is the Proton acceptor of the active site. Phe-67, Asn-69, and Asn-115 together coordinate tRNA.

Belongs to the PTH family. In terms of assembly, monomer.

The protein resides in the cytoplasm. It carries out the reaction an N-acyl-L-alpha-aminoacyl-tRNA + H2O = an N-acyl-L-amino acid + a tRNA + H(+). In terms of biological role, hydrolyzes ribosome-free peptidyl-tRNAs (with 1 or more amino acids incorporated), which drop off the ribosome during protein synthesis, or as a result of ribosome stalling. Functionally, catalyzes the release of premature peptidyl moieties from peptidyl-tRNA molecules trapped in stalled 50S ribosomal subunits, and thus maintains levels of free tRNAs and 50S ribosomes. This chain is Peptidyl-tRNA hydrolase, found in Shigella boydii serotype 18 (strain CDC 3083-94 / BS512).